The primary structure comprises 276 residues: Secretagogin (276 aa).

EF-hand domains are found at residues 12-47 (LDAA…LLAK), 58-93 (NVQK…EDEN), 105-140 (DNSV…LFLH), 149-184 (ELEE…QENF), 197-232 (ERKR…MMEL), and 240-276 (VDLD…KINP). 25 residues coordinate Ca(2+): Asp-25, Tyr-31, Glu-36, Ser-73, Glu-75, Arg-77, Glu-82, Asp-118, Asp-120, Ser-122, Glu-129, Asp-162, Asn-164, Asp-166, Arg-168, Asp-173, Asp-210, Ser-212, Thr-214, Glu-221, Asp-254, Asn-256, Asp-258, Lys-260, and Glu-265.

It localises to the cytoplasm. The protein localises to the secreted. The protein resides in the cytoplasmic vesicle. It is found in the secretory vesicle membrane. The chain is Secretagogin (Scgn) from Mus musculus (Mouse).